A 277-amino-acid polypeptide reads, in one-letter code: Sarcosine/dimethylglycine N-methyltransferase (277 aa).

This sequence belongs to the methyltransferase superfamily. In terms of assembly, monomer.

It catalyses the reaction sarcosine + 2 S-adenosyl-L-methionine = glycine betaine + 2 S-adenosyl-L-homocysteine + 2 H(+). It carries out the reaction sarcosine + S-adenosyl-L-methionine = N,N-dimethylglycine + S-adenosyl-L-homocysteine + H(+). The catalysed reaction is N,N-dimethylglycine + S-adenosyl-L-methionine = glycine betaine + S-adenosyl-L-homocysteine + H(+). The protein operates within amine and polyamine biosynthesis; betaine biosynthesis via glycine pathway; betaine from glycine: step 2/3. It participates in amine and polyamine biosynthesis; betaine biosynthesis via glycine pathway; betaine from glycine: step 3/3. Inhibited by n-butylic acid and S-adenosyl-L-homocysteine. Catalyzes the methylation of sarcosine and dimethylglycine to dimethylglycine and betaine, respectively, with S-adenosylmethionine (AdoMet) acting as the methyl donor. Activity with sarcosine is much weaker than activity with dimethylglycine. In Aphanothece halophytica, this protein is Sarcosine/dimethylglycine N-methyltransferase.